The primary structure comprises 138 residues: Cysteine desulfuration protein SufE (138 aa).

The active-site Cysteine persulfide intermediate is the Cys51.

It belongs to the SufE family. As to quaternary structure, homodimer. Interacts with SufS.

The protein localises to the cytoplasm. Its pathway is cofactor biosynthesis; iron-sulfur cluster biosynthesis. Participates in cysteine desulfuration mediated by SufS. Cysteine desulfuration mobilizes sulfur from L-cysteine to yield L-alanine and constitutes an essential step in sulfur metabolism for biosynthesis of a variety of sulfur-containing biomolecules. Functions as a sulfur acceptor for SufS, by mediating the direct transfer of the sulfur atom from the S-sulfanylcysteine of SufS, an intermediate product of cysteine desulfuration process. This is Cysteine desulfuration protein SufE from Salmonella dublin (strain CT_02021853).